We begin with the raw amino-acid sequence, 104 residues long: Flagellar hook-basal body complex protein FliE (104 aa).

Belongs to the FliE family.

Its subcellular location is the bacterial flagellum basal body. This chain is Flagellar hook-basal body complex protein FliE, found in Escherichia coli (strain 55989 / EAEC).